Reading from the N-terminus, the 117-residue chain is Aspartate 1-decarboxylase (117 aa).

The active-site Schiff-base intermediate with substrate; via pyruvic acid is Ser-25. The residue at position 25 (Ser-25) is a Pyruvic acid (Ser). Thr-57 is a binding site for substrate. Tyr-58 (proton donor) is an active-site residue. 73-75 (GAA) lines the substrate pocket.

This sequence belongs to the PanD family. Heterooctamer of four alpha and four beta subunits. Requires pyruvate as cofactor. In terms of processing, is synthesized initially as an inactive proenzyme, which is activated by self-cleavage at a specific serine bond to produce a beta-subunit with a hydroxyl group at its C-terminus and an alpha-subunit with a pyruvoyl group at its N-terminus.

The protein localises to the cytoplasm. It catalyses the reaction L-aspartate + H(+) = beta-alanine + CO2. It participates in cofactor biosynthesis; (R)-pantothenate biosynthesis; beta-alanine from L-aspartate: step 1/1. Catalyzes the pyruvoyl-dependent decarboxylation of aspartate to produce beta-alanine. The sequence is that of Aspartate 1-decarboxylase from Bacteroides fragilis (strain ATCC 25285 / DSM 2151 / CCUG 4856 / JCM 11019 / LMG 10263 / NCTC 9343 / Onslow / VPI 2553 / EN-2).